The sequence spans 173 residues: Alpha-crystallin A chain (173 aa).

M1 carries the post-translational modification N-acetylmethionine. The tract at residues 1-63 (MDIAIQQPWF…RTVLDSGVSE (63 aa)) is required for complex formation with BFSP1 and BFSP2. At Q6 the chain carries Deamidated glutamine; partial. The residue at position 45 (S45) is a Phosphoserine. Q50 is subject to Deamidated glutamine; partial. The region spanning 52 to 162 (LFRTVLDSGV…GHSERAIPVS (111 aa)) is the sHSP domain. 2 positions are modified to N6-acetyllysine: K70 and K99. H100 is a binding site for Zn(2+). N101 carries the deamidated asparagine; partial modification. 2 residues coordinate Zn(2+): E102 and H107. S122 bears the Phosphoserine mark. At N123 the chain carries Deamidated asparagine; partial. Residues 144-173 (PKVPSGVDAGHSERAIPVSREEKPSSAPSS) form a disordered region. Over residues 153–167 (GHSERAIPVSREEKP) the composition is skewed to basic and acidic residues. H154 contacts Zn(2+). O-linked (GlcNAc) serine glycosylation is present at S162.

It belongs to the small heat shock protein (HSP20) family. As to quaternary structure, heteromer composed of three CRYAA and one CRYAB subunits. Inter-subunit bridging via zinc ions enhances stability, which is crucial as there is no protein turn over in the lens. Can also form homodimers and homotetramers (dimers of dimers) which serve as the building blocks of homooligomers. Within homooligomers, the zinc-binding motif is created from residues of 3 different molecules. His-100 and Glu-102 from one molecule are ligands of the zinc ion, and His-107 and His-154 residues from additional molecules complete the site with tetrahedral coordination geometry. Part of a complex required for lens intermediate filament formation composed of BFSP1, BFSP2 and CRYAA. Post-translationally, acetylation at Lys-70 may increase chaperone activity. In terms of processing, undergoes age-dependent proteolytical cleavage at the C-terminus.

It localises to the cytoplasm. The protein localises to the nucleus. In terms of biological role, contributes to the transparency and refractive index of the lens. Acts as a chaperone, preventing aggregation of various proteins under a wide range of stress conditions. Required for the correct formation of lens intermediate filaments as part of a complex composed of BFSP1, BFSP2 and CRYAA. The polypeptide is Alpha-crystallin A chain (CRYAA) (Neovison vison (American mink)).